The sequence spans 326 residues: 4-hydroxythreonine-4-phosphate dehydrogenase (326 aa).

The substrate site is built by His132 and Thr133. His163, His208, and His263 together coordinate a divalent metal cation. Positions 271, 280, and 289 each coordinate substrate.

It belongs to the PdxA family. As to quaternary structure, homodimer. Zn(2+) is required as a cofactor. Requires Mg(2+) as cofactor. Co(2+) serves as cofactor.

It localises to the cytoplasm. It catalyses the reaction 4-(phosphooxy)-L-threonine + NAD(+) = 3-amino-2-oxopropyl phosphate + CO2 + NADH. The protein operates within cofactor biosynthesis; pyridoxine 5'-phosphate biosynthesis; pyridoxine 5'-phosphate from D-erythrose 4-phosphate: step 4/5. Its function is as follows. Catalyzes the NAD(P)-dependent oxidation of 4-(phosphooxy)-L-threonine (HTP) into 2-amino-3-oxo-4-(phosphooxy)butyric acid which spontaneously decarboxylates to form 3-amino-2-oxopropyl phosphate (AHAP). This chain is 4-hydroxythreonine-4-phosphate dehydrogenase, found in Roseobacter denitrificans (strain ATCC 33942 / OCh 114) (Erythrobacter sp. (strain OCh 114)).